The sequence spans 591 residues: Nuclear receptor subfamily 4 group A member 2 (591 aa).

2 disordered regions span residues M1 to Y22 and S110 to P133. A compositionally biased stretch (low complexity) spans Y8–Y22. Positions E253–T328 form a DNA-binding region, nuclear receptor. 2 consecutive NR C4-type zinc fingers follow at residues C256 to C276 and C292 to C311. The short motif at F280–R307 is the Bipartite nuclear localization signal (NLS1) element. The interval S330 to P354 is disordered. A Nuclear localization signal (NLS1) motif is present at residues L331–K343. Over residues P345–P354 the composition is skewed to pro residues. One can recognise an NR LBD domain in the interval P353–T588. The short motif at F436–A445 is the nuclear export sequence (NES1) element. The short motif at Q561 to K570 is the nuclear export sequence (NES2) element.

The protein belongs to the nuclear hormone receptor family.

It localises to the cytoplasm. The protein localises to the nucleus. In terms of biological role, transcriptional regulator which may play a role in the differentiation and maintenance of meso-diencephalic dopaminergic (mdDA) neurons. This chain is Nuclear receptor subfamily 4 group A member 2 (nr4a2), found in Xenopus tropicalis (Western clawed frog).